The primary structure comprises 278 residues: 2-dehydro-3-deoxyphosphooctonate aldolase (278 aa).

Belongs to the KdsA family.

It localises to the cytoplasm. The catalysed reaction is D-arabinose 5-phosphate + phosphoenolpyruvate + H2O = 3-deoxy-alpha-D-manno-2-octulosonate-8-phosphate + phosphate. Its pathway is carbohydrate biosynthesis; 3-deoxy-D-manno-octulosonate biosynthesis; 3-deoxy-D-manno-octulosonate from D-ribulose 5-phosphate: step 2/3. The protein operates within bacterial outer membrane biogenesis; lipopolysaccharide biosynthesis. In Koribacter versatilis (strain Ellin345), this protein is 2-dehydro-3-deoxyphosphooctonate aldolase.